The sequence spans 314 residues: Putative S-adenosyl-L-methionine-dependent methyltransferase MAP_0256 (314 aa).

S-adenosyl-L-methionine contacts are provided by residues D132 and 161–162; that span reads DL.

This sequence belongs to the UPF0677 family.

In terms of biological role, exhibits S-adenosyl-L-methionine-dependent methyltransferase activity. In Mycolicibacterium paratuberculosis (strain ATCC BAA-968 / K-10) (Mycobacterium paratuberculosis), this protein is Putative S-adenosyl-L-methionine-dependent methyltransferase MAP_0256.